A 669-amino-acid chain; its full sequence is Dymeclin (669 aa).

G2 carries the N-myristoyl glycine lipid modification.

The protein belongs to the dymeclin family. In terms of processing, myristoylated in vitro; myristoylation is not essential for protein targeting to Golgi compartment.

The protein resides in the cytoplasm. It localises to the golgi apparatus. Necessary for correct organization of Golgi apparatus. The protein is Dymeclin (dym) of Xenopus laevis (African clawed frog).